Reading from the N-terminus, the 210-residue chain is Probable molybdenum cofactor guanylyltransferase (210 aa).

GTP-binding positions include 18 to 20, Lys-31, Asn-59, Asp-86, and Asp-111; that span reads LAG. Residue Asp-111 coordinates Mg(2+).

It belongs to the MobA family. It depends on Mg(2+) as a cofactor.

The protein localises to the cytoplasm. It catalyses the reaction Mo-molybdopterin + GTP + H(+) = Mo-molybdopterin guanine dinucleotide + diphosphate. In terms of biological role, transfers a GMP moiety from GTP to Mo-molybdopterin (Mo-MPT) cofactor (Moco or molybdenum cofactor) to form Mo-molybdopterin guanine dinucleotide (Mo-MGD) cofactor. This is Probable molybdenum cofactor guanylyltransferase (nasC) from Haloferax mediterranei (strain ATCC 33500 / DSM 1411 / JCM 8866 / NBRC 14739 / NCIMB 2177 / R-4) (Halobacterium mediterranei).